The chain runs to 278 residues: Large ribosomal subunit protein uL24m (278 aa).

The KOW domain occupies 109 to 142; sequence FFPGDLVQVMVGKDKGRQGLVLTTSRDSSDVIVD.

This sequence belongs to the universal ribosomal protein uL24 family.

It is found in the mitochondrion. In Caenorhabditis elegans, this protein is Large ribosomal subunit protein uL24m (mrpl-24).